The sequence spans 445 residues: Phosphoglucosamine mutase (445 aa).

S100 functions as the Phosphoserine intermediate in the catalytic mechanism. 4 residues coordinate Mg(2+): S100, D240, D242, and D244. Phosphoserine is present on S100.

It belongs to the phosphohexose mutase family. Requires Mg(2+) as cofactor. In terms of processing, activated by phosphorylation.

The enzyme catalyses alpha-D-glucosamine 1-phosphate = D-glucosamine 6-phosphate. Catalyzes the conversion of glucosamine-6-phosphate to glucosamine-1-phosphate. This Pelotomaculum thermopropionicum (strain DSM 13744 / JCM 10971 / SI) protein is Phosphoglucosamine mutase.